The sequence spans 147 residues: Large ribosomal subunit protein uL16 (147 aa).

The protein belongs to the universal ribosomal protein uL16 family. As to quaternary structure, part of the 50S ribosomal subunit.

Its function is as follows. Binds 23S rRNA and is also seen to make contacts with the A and possibly P site tRNAs. This chain is Large ribosomal subunit protein uL16, found in Caldicellulosiruptor bescii (strain ATCC BAA-1888 / DSM 6725 / KCTC 15123 / Z-1320) (Anaerocellum thermophilum).